We begin with the raw amino-acid sequence, 266 residues long: Type III pantothenate kinase (266 aa).

9–16 lines the ATP pocket; the sequence is DAGNSRIK. Substrate contacts are provided by residues tyrosine 96 and 103–106; that span reads GSDR. The active-site Proton acceptor is the aspartate 105. An ATP-binding site is contributed by threonine 129. Threonine 189 is a substrate binding site.

The protein belongs to the type III pantothenate kinase family. As to quaternary structure, homodimer. NH4(+) serves as cofactor. Requires K(+) as cofactor.

It localises to the cytoplasm. It catalyses the reaction (R)-pantothenate + ATP = (R)-4'-phosphopantothenate + ADP + H(+). It functions in the pathway cofactor biosynthesis; coenzyme A biosynthesis; CoA from (R)-pantothenate: step 1/5. Its function is as follows. Catalyzes the phosphorylation of pantothenate (Pan), the first step in CoA biosynthesis. The chain is Type III pantothenate kinase from Burkholderia cenocepacia (strain ATCC BAA-245 / DSM 16553 / LMG 16656 / NCTC 13227 / J2315 / CF5610) (Burkholderia cepacia (strain J2315)).